The primary structure comprises 321 residues: Probable transaldolase (321 aa).

The Schiff-base intermediate with substrate role is filled by lysine 133.

It belongs to the transaldolase family. Type 1 subfamily. Homodimer.

It is found in the cytoplasm. It catalyses the reaction D-sedoheptulose 7-phosphate + D-glyceraldehyde 3-phosphate = D-erythrose 4-phosphate + beta-D-fructose 6-phosphate. The protein operates within carbohydrate degradation; pentose phosphate pathway; D-glyceraldehyde 3-phosphate and beta-D-fructose 6-phosphate from D-ribose 5-phosphate and D-xylulose 5-phosphate (non-oxidative stage): step 2/3. Its function is as follows. Transaldolase is important for the balance of metabolites in the pentose-phosphate pathway. The protein is Probable transaldolase (tal) of Dictyostelium discoideum (Social amoeba).